The sequence spans 348 residues: Phospho-N-acetylmuramoyl-pentapeptide-transferase (348 aa).

10 helical membrane-spanning segments follow: residues 11-31 (SLIL…IFLG), 67-87 (TAGG…LLPL), 92-112 (TWLF…DDIV), 128-148 (FIVQ…IDKE), 163-183 (IFLG…MLAI), 198-218 (GLAT…AIMS), 222-242 (PLAY…LAFL), 251-271 (VFMG…CAVM), 276-296 (LFLI…ILQV), and 326-346 (VVAR…VAAL).

This sequence belongs to the glycosyltransferase 4 family. MraY subfamily. It depends on Mg(2+) as a cofactor.

The protein localises to the cell inner membrane. It carries out the reaction UDP-N-acetyl-alpha-D-muramoyl-L-alanyl-gamma-D-glutamyl-meso-2,6-diaminopimeloyl-D-alanyl-D-alanine + di-trans,octa-cis-undecaprenyl phosphate = di-trans,octa-cis-undecaprenyl diphospho-N-acetyl-alpha-D-muramoyl-L-alanyl-D-glutamyl-meso-2,6-diaminopimeloyl-D-alanyl-D-alanine + UMP. It participates in cell wall biogenesis; peptidoglycan biosynthesis. Functionally, catalyzes the initial step of the lipid cycle reactions in the biosynthesis of the cell wall peptidoglycan: transfers peptidoglycan precursor phospho-MurNAc-pentapeptide from UDP-MurNAc-pentapeptide onto the lipid carrier undecaprenyl phosphate, yielding undecaprenyl-pyrophosphoryl-MurNAc-pentapeptide, known as lipid I. The protein is Phospho-N-acetylmuramoyl-pentapeptide-transferase of Chlamydia felis (strain Fe/C-56) (Chlamydophila felis).